Reading from the N-terminus, the 59-residue chain is Protein ORF5a (59 aa).

The chain crosses the membrane as a helical; Signal-anchor for type III membrane protein span at residues 13-33; that stretch reads VIYDCIAILALGCAITCLLLI.

It is found in the membrane. This is Protein ORF5a (GP5) from Equine arteritis virus (strain Bucyrus) (EAV).